Consider the following 433-residue polypeptide: 3-phosphoshikimate 1-carboxyvinyltransferase (433 aa).

3-phosphoshikimate-binding residues include K22, S23, and R27. K22 provides a ligand contact to phosphoenolpyruvate. G94 and R122 together coordinate phosphoenolpyruvate. The 3-phosphoshikimate site is built by S168, S169, Q170, S196, D319, and K346. Q170 serves as a coordination point for phosphoenolpyruvate. Residue D319 is the Proton acceptor of the active site. Phosphoenolpyruvate contacts are provided by R350, R394, and K418.

The protein belongs to the EPSP synthase family. Monomer.

Its subcellular location is the cytoplasm. It catalyses the reaction 3-phosphoshikimate + phosphoenolpyruvate = 5-O-(1-carboxyvinyl)-3-phosphoshikimate + phosphate. Its pathway is metabolic intermediate biosynthesis; chorismate biosynthesis; chorismate from D-erythrose 4-phosphate and phosphoenolpyruvate: step 6/7. Catalyzes the transfer of the enolpyruvyl moiety of phosphoenolpyruvate (PEP) to the 5-hydroxyl of shikimate-3-phosphate (S3P) to produce enolpyruvyl shikimate-3-phosphate and inorganic phosphate. This Nitrosomonas eutropha (strain DSM 101675 / C91 / Nm57) protein is 3-phosphoshikimate 1-carboxyvinyltransferase.